Here is a 246-residue protein sequence, read N- to C-terminus: Transmembrane protein 41 homolog (246 aa).

A run of 6 helical transmembrane segments spans residues 12–32 (WLVL…YSNF), 68–88 (SVVL…AIPG), 101–123 (PFYV…CYTI), 159–179 (IFLR…SPVL), 182–202 (PLAP…FLYI), and 219–239 (SWSS…PILL).

The protein belongs to the TMEM41 family.

The protein localises to the membrane. The protein is Transmembrane protein 41 homolog (tag-175) of Caenorhabditis elegans.